Reading from the N-terminus, the 740-residue chain is E3 ubiquitin-protein ligase DTX3L (740 aa).

An N-acetylalanine modification is found at A2. The residue at position 9 (S9) is a Phosphoserine. 3 disordered regions span residues 96 to 119, 195 to 231, and 524 to 551; these read NTRPQISSLTQSQAETPSGDMHQH, SEQKQQFSPSMTERKPLSQQERDSCISPSEPETKAEQ, and HETPMDIDSDDSKAASPPLKGSVSSEAS. Polar residues-rich tracts occupy residues 98 to 111 and 195 to 205; these read RPQISSLTQSQAET and SEQKQQFSPSM. Position 202 is a phosphoserine (S202). The span at 206–218 shows a compositional bias: basic and acidic residues; sequence TERKPLSQQERDS. Phosphoserine is present on residues S221, S532, and S539. The segment at 561 to 600 adopts an RING-type zinc-finger fold; that stretch reads CVICMDTISNKKVLPKCKHEFCAPCINKAMSYKPICPTCQ.

This sequence belongs to the Deltex family. In terms of assembly, homodimer and heterodimer. Can heterodimerize with DTX1, enhancing its ubiquitin ligase activity in vitro. Interacts (via N-terminus) with ADP ribosyltransferase PARP9/BAL1 (via PARP catalytic domain) forming a stable complex; the interaction is required to activate PARP9 but is dispensable for DTX3L catalytic activity. Forms a complex with STAT1 and PARP9 independently of IFNB1 or IFNG-mediated STAT1 'Tyr-701' phosphorylation. Found in a complex with PARP9, STAT1 and H2BC9. Found in a complex with E3 ligase ITCH and ESCRT-0 components HGS and STAM. Interacts (via C-terminus) with ITCH; the interaction is increased upon CXCL12 stimulation and inhibits ITCH catalytic activity; the interaction is direct. Interacts with HGS and STAM; the interaction brings together HGS and STAM and promotes their recruitment to early endosomes. (Microbial infection) Interacts with encephalomyocarditis virus (EMCV) C3 protease; the interaction results in C3 protease 'Lys-48'-linked ubiquitination. As to quaternary structure, (Microbial infection) Interacts with human rhinovirus (HRV) C3 protease; the interaction results in C3 protease 'Lys-48'-linked ubiquitination. In terms of processing, autoubiquitinated.

The protein resides in the cytoplasm. It is found in the nucleus. Its subcellular location is the early endosome membrane. The protein localises to the lysosome membrane. The catalysed reaction is S-ubiquitinyl-[E2 ubiquitin-conjugating enzyme]-L-cysteine + [acceptor protein]-L-lysine = [E2 ubiquitin-conjugating enzyme]-L-cysteine + N(6)-ubiquitinyl-[acceptor protein]-L-lysine.. It participates in protein modification; protein ubiquitination. Binding to PARP9 enhances DTX3L catalytic activity. Its function is as follows. E3 ubiquitin-protein ligase which, in association with ADP-ribosyltransferase PARP9, plays a role in DNA damage repair and in interferon-mediated antiviral responses. Monoubiquitinates several histones, including histone H2A, H2B, H3 and H4. In response to DNA damage, mediates monoubiquitination of 'Lys-91' of histone H4 (H4K91ub1). The exact role of H4K91ub1 in DNA damage response is still unclear but it may function as a licensing signal for additional histone H4 post-translational modifications such as H4 'Lys-20' methylation (H4K20me). PARP1-dependent PARP9-DTX3L-mediated ubiquitination promotes the rapid and specific recruitment of 53BP1/TP53BP1, UIMC1/RAP80, and BRCA1 to DNA damage sites. By monoubiquitinating histone H2B H2BC9/H2BJ and thereby promoting chromatin remodeling, positively regulates STAT1-dependent interferon-stimulated gene transcription and thus STAT1-mediated control of viral replication. Independently of its catalytic activity, promotes the sorting of chemokine receptor CXCR4 from early endosome to lysosome following CXCL12 stimulation by reducing E3 ligase ITCH activity and thus ITCH-mediated ubiquitination of endosomal sorting complex required for transport ESCRT-0 components HGS and STAM. In addition, required for the recruitment of HGS and STAM to early endosomes. In association with PARP9, plays a role in antiviral responses by mediating 'Lys-48'-linked ubiquitination of encephalomyocarditis virus (EMCV) and human rhinovirus (HRV) C3 proteases and thus promoting their proteasomal-mediated degradation. This is E3 ubiquitin-protein ligase DTX3L (DTX3L) from Homo sapiens (Human).